A 257-amino-acid polypeptide reads, in one-letter code: 3-dehydroquinate dehydratase (257 aa).

Residues Glu-50–Arg-52 and Arg-86 each bind 3-dehydroquinate. Catalysis depends on His-147, which acts as the Proton donor/acceptor. Lys-174 serves as the catalytic Schiff-base intermediate with substrate. Positions 216, 235, and 239 each coordinate 3-dehydroquinate.

Belongs to the type-I 3-dehydroquinase family. As to quaternary structure, homodimer.

The catalysed reaction is 3-dehydroquinate = 3-dehydroshikimate + H2O. Its pathway is metabolic intermediate biosynthesis; chorismate biosynthesis; chorismate from D-erythrose 4-phosphate and phosphoenolpyruvate: step 3/7. In terms of biological role, involved in the third step of the chorismate pathway, which leads to the biosynthesis of aromatic amino acids. Catalyzes the cis-dehydration of 3-dehydroquinate (DHQ) and introduces the first double bond of the aromatic ring to yield 3-dehydroshikimate. The polypeptide is 3-dehydroquinate dehydratase (Geobacillus thermodenitrificans (strain NG80-2)).